Here is a 120-residue protein sequence, read N- to C-terminus: Seripauperin-4 (120 aa).

A helical membrane pass occupies residues 7-24 (IAAGVAAIAATASATTTI).

Belongs to the SRP1/TIP1 family. Seripauperin subfamily.

It is found in the membrane. The sequence is that of Seripauperin-4 (PAU4) from Saccharomyces cerevisiae (strain ATCC 204508 / S288c) (Baker's yeast).